A 606-amino-acid polypeptide reads, in one-letter code: Mitogen-activated protein kinase kinase kinase 7 (606 aa).

The interaction with MAPK8IP1 stretch occupies residues 1–300 (MSTASAASSS…FPGADEPLQY (300 aa)). Positions 36–291 (IEVEEVVGRG…KIMTHLMRYF (256 aa)) constitute a Protein kinase domain. Residues 42 to 50 (VGRGAFGVV) and K63 each bind ATP. K72 is covalently cross-linked (Glycyl lysine isopeptide (Lys-Gly) (interchain with G-Cter in ubiquitin)). The Proton acceptor role is filled by D156. A Glycyl lysine isopeptide (Lys-Gly) (interchain with G-Cter in ubiquitin) cross-link involves residue K158. 2 positions are modified to phosphothreonine; by autocatalysis: T184 and T187. Residue S192 is modified to Phosphoserine; by autocatalysis. Residue K209 forms a Glycyl lysine isopeptide (Lys-Gly) (interchain with G-Cter in ubiquitin) linkage. Disordered stretches follow at residues 301–338 (PCQYSDEGQSNSATSTGSFMDIASTNTSNKSDTNMEQV) and 354–391 (KNQAKQQSDSGRLSLGASRGSSVESLPPTSEGKRMSAD). Over residues 306-338 (DEGQSNSATSTGSFMDIASTNTSNKSDTNMEQV) the composition is skewed to polar residues. Low complexity predominate over residues 361 to 375 (SDSGRLSLGASRGSS). 3 positions are modified to phosphoserine: S367, S389, and S439. Positions 443–452 (LTVTGTEPGQ) are enriched in polar residues. Positions 443 to 492 (LTVTGTEPGQVSSRSSSPSVRMITTSGPTSEKPARSLPWTPDDSTDTNGS) are disordered. Low complexity predominate over residues 453-463 (VSSRSSSPSVR). S455 bears the Phosphoserine mark.

The protein belongs to the protein kinase superfamily. STE Ser/Thr protein kinase family. MAP kinase kinase kinase subfamily. As to quaternary structure, can form homodimer. Binds both upstream activators and downstream substrates in multimolecular complexes. Interacts with TAB1/MAP3K7IP1, TAB2/MAP3K7IP2 and TAB3/MAP3K7IP3. Identified in the TRIKA2 complex composed of MAP3K7/TAK1, TAB1/MAP3K7IP1 and TAB2/MAP3K7IP2. Interacts with PPM1L and PPM1B/PP2CB. Interaction with PP2A and PPP6C leads to its repressed activity. Interacts with TRAF6 and TAB1/MAP3K7IP1; during IL-1 signaling. Interacts with TAOK1 and TAOK2; interaction with TAOK2 interferes with MAP3K7 interaction with IKKA, thus preventing NF-kappa-B activation. Interacts with DYNC2I2 (via WD domains). Interacts with CYLD and RBCK1. Interacts with TGFBR1; induces MAP3K7/TAK1 activation by TRAF6. Interacts with MAPK8IP1 and SMAD6. Interacts with isoform 1 of VRK2. Interacts with DAB2; the interaction is induced by TGF-beta stimulation and may mediate TGF-beta stimulated JNK activation. Interacts with TRIM5. Part of a complex containing ITCH, NDFIP1 and MAP3K7. Interacts with PLEKHM1 (via N- and C-terminus). Found in a complex with SH3RF1, RAC2, MAP2K7/MKK7, MAPK8IP1/JIP1, MAPK8/JNK1 and MAPK9/JNK2. Interacts with SASH1. Interacts with RIPK1. It depends on Mg(2+) as a cofactor. Association with TAB1/MAP3K7IP1 promotes autophosphorylation at Ser-192 and subsequent activation. Association with TAB2/MAP3K7IP2, itself associated with free unanchored Lys-63 polyubiquitin chain, promotes autophosphorylation and subsequent activation of MAP3K7. Dephosphorylation at Ser-192 by PPM1B/PP2CB and at Thr-187 by PP2A and PPP6C leads to inactivation. Deubiquitinated by USP19; leading to negative regulation of TNF-alpha- and IL-1beta-triggered NF-kappa-B activation. Post-translationally, 'Lys-48'-linked polyubiquitination at Lys-72 is induced by TNFalpha, and leads to proteasomal degradation. Undergoes 'Lys-48'-linked polyubiquitination catalyzed by ITCH. 'Lys-63'-linked polyubiquitination at Lys-158 by TRIM8 does not lead to proteasomal degradation but contributes to autophosphorylation and activation. Deubiquitinated by CYLD, a protease that selectively cleaves 'Lys-63'-linked ubiquitin chains.

It localises to the cytoplasm. Its subcellular location is the cell membrane. The catalysed reaction is L-seryl-[protein] + ATP = O-phospho-L-seryl-[protein] + ADP + H(+). It catalyses the reaction L-threonyl-[protein] + ATP = O-phospho-L-threonyl-[protein] + ADP + H(+). With respect to regulation, activated by pro-inflammatory cytokines and in response to physical and chemical stresses, including osmotic stress, oxidative stress, arsenic and ultraviolet light irradiation. Activated by 'Lys-63'-linked polyubiquitination and by autophosphorylation. Association with TAB1/MAP3K7IP1 and TAB2/MAP3K7IP2 promotes activation through autophosphorylation, whereas PPM1B/PP2CB, PP2A and PPP6C dephosphorylation leads to inactivation. Ceramides are also able to activate MAP3K7/TAK1. Serine/threonine kinase which acts as an essential component of the MAP kinase signal transduction pathway. Plays an important role in the cascades of cellular responses evoked by changes in the environment. Mediates signal transduction of TRAF6, various cytokines including interleukin-1 (IL-1), transforming growth factor-beta (TGFB), TGFB-related factors like BMP2 and BMP4, toll-like receptors (TLR), tumor necrosis factor receptor CD40 and B-cell receptor (BCR). Once activated, acts as an upstream activator of the MKK/JNK signal transduction cascade and the p38 MAPK signal transduction cascade through the phosphorylation and activation of several MAP kinase kinases like MAP2K1/MEK1, MAP2K3/MKK3, MAP2K6/MKK6 and MAP2K7/MKK7. These MAP2Ks in turn activate p38 MAPKs and c-jun N-terminal kinases (JNKs); both p38 MAPK and JNK pathways control the transcription factors activator protein-1 (AP-1). Independently of MAP2Ks and p38 MAPKs, acts as a key activator of NF-kappa-B by promoting activation of the I-kappa-B-kinase (IKK) core complex. Mechanistically, recruited to polyubiquitin chains of RIPK2 and IKBKG/NEMO via TAB2/MAP3K7IP2 and TAB3/MAP3K7IP3, and catalyzes phosphorylation and activation of IKBKB/IKKB component of the IKK complex, leading to NF-kappa-B activation. In osmotic stress signaling, plays a major role in the activation of MAPK8/JNK1, but not that of NF-kappa-B. Promotes TRIM5 capsid-specific restriction activity. Phosphorylates RIPK1 at 'Ser-321' which positively regulates RIPK1 interaction with RIPK3 to promote necroptosis but negatively regulates RIPK1 kinase activity and its interaction with FADD to mediate apoptosis. Phosphorylates STING1 in response to cGAMP-activation, promoting association between STEEP1 and STING1 and STING1 translocation to COPII vesicles. The chain is Mitogen-activated protein kinase kinase kinase 7 (Map3k7) from Rattus norvegicus (Rat).